A 75-amino-acid polypeptide reads, in one-letter code: UPF0291 protein Teth39_0326 (75 aa).

The protein belongs to the UPF0291 family.

Its subcellular location is the cytoplasm. This is UPF0291 protein Teth39_0326 from Thermoanaerobacter pseudethanolicus (strain ATCC 33223 / 39E) (Clostridium thermohydrosulfuricum).